The sequence spans 274 residues: MTGFGARLAAAKAQRGPLCVGIDPHPELLRAWDLPTTADGLAAFCDICVEAFAGFAVVKPQVAFFEAYGAAGFAVLERTIAALRSAGVLVLADAKRGDIGTTMAAYAAAWAGDSPLAADAVTASPYLGFGSLRPLLEAAAAHDRGVFVLAATSNPEGATVQRAAFDGRTVAQLVVDQAAVVNRSTNPAGPGYVGVVVGATVLQPPDLSALGGPVLVPGLGVQGGRPEALAGLGGAEPGQLLPAVAREVLRAGPDVAELRAAADRMLDAVAYLDA.

Lys-95 functions as the Proton donor in the catalytic mechanism.

The protein belongs to the OMP decarboxylase family. Type 2 subfamily.

The catalysed reaction is orotidine 5'-phosphate + H(+) = UMP + CO2. Its pathway is pyrimidine metabolism; UMP biosynthesis via de novo pathway; UMP from orotate: step 2/2. In Mycolicibacterium paratuberculosis (strain ATCC BAA-968 / K-10) (Mycobacterium paratuberculosis), this protein is Orotidine 5'-phosphate decarboxylase.